A 285-amino-acid polypeptide reads, in one-letter code: Nucleotide-binding protein Avin_12760 (285 aa).

Residue 8–15 (GRSGSGKS) coordinates ATP. 60–63 (DARN) provides a ligand contact to GTP.

Belongs to the RapZ-like family.

Functionally, displays ATPase and GTPase activities. This is Nucleotide-binding protein Avin_12760 from Azotobacter vinelandii (strain DJ / ATCC BAA-1303).